Here is a 232-residue protein sequence, read N- to C-terminus: Sensory rhodopsin III (232 aa).

Helical transmembrane passes span 5-25, 39-59, 73-93, 100-120, 125-145, 168-188, and 194-214; these read IVWY…FVWF, LPPI…LIAG, FADW…LAGV, LAVA…SMSG, IAFA…IKTF, VVTW…TGII, and NFLV…ILLV. Lysine 205 carries the post-translational modification N6-(retinylidene)lysine.

It belongs to the archaeal/bacterial/fungal opsin family. In terms of assembly, interacts with HtrM. The covalent binding of retinal to the apoprotein, bacterioopsin, generates bacteriorhodopsin.

The protein resides in the membrane. In terms of biological role, sensory rhodopsin. Associates with an unusual transducer lacking a methyl-accepting transducer domain found in all other photosensory transducers. The chromophore is all-trans-retinal in the dark. The polypeptide is Sensory rhodopsin III (xop2) (Haloarcula marismortui (strain ATCC 43049 / DSM 3752 / JCM 8966 / VKM B-1809) (Halobacterium marismortui)).